The chain runs to 333 residues: Ornithine carbamoyltransferase (333 aa).

Residues 56–59, glutamine 83, arginine 107, and 134–137 each bind carbamoyl phosphate; these read STRT and HPTQ. L-ornithine contacts are provided by residues asparagine 167, aspartate 231, and 235–236; that span reads SM. Carbamoyl phosphate-binding positions include 273–274 and arginine 318; that span reads CL.

Belongs to the aspartate/ornithine carbamoyltransferase superfamily. OTCase family.

It localises to the cytoplasm. The catalysed reaction is carbamoyl phosphate + L-ornithine = L-citrulline + phosphate + H(+). Its pathway is amino-acid biosynthesis; L-arginine biosynthesis; L-arginine from L-ornithine and carbamoyl phosphate: step 1/3. Reversibly catalyzes the transfer of the carbamoyl group from carbamoyl phosphate (CP) to the N(epsilon) atom of ornithine (ORN) to produce L-citrulline. This chain is Ornithine carbamoyltransferase, found in Staphylococcus aureus (strain MSSA476).